Here is a 149-residue protein sequence, read N- to C-terminus: Transcriptional repressor NrdR (149 aa).

A zinc finger lies at 3–34; sequence CPFCFAVDTKVIDSRLVGEGSSVRRRRQCLVC. An ATP-cone domain is found at 49 to 139; sequence PRVVKSNDVR…VYRSFEDIKE (91 aa).

Belongs to the NrdR family. Zn(2+) serves as cofactor.

Functionally, negatively regulates transcription of bacterial ribonucleotide reductase nrd genes and operons by binding to NrdR-boxes. The sequence is that of Transcriptional repressor NrdR from Klebsiella pneumoniae (strain 342).